We begin with the raw amino-acid sequence, 251 residues long: Triosephosphate isomerase (251 aa).

Substrate is bound at residue 9 to 11 (NWK). Histidine 95 (electrophile) is an active-site residue. Glutamate 167 acts as the Proton acceptor in catalysis. Substrate is bound by residues glycine 173, serine 213, and 234–235 (GG).

Belongs to the triosephosphate isomerase family. In terms of assembly, homodimer.

It localises to the cytoplasm. The enzyme catalyses D-glyceraldehyde 3-phosphate = dihydroxyacetone phosphate. It participates in carbohydrate biosynthesis; gluconeogenesis. Its pathway is carbohydrate degradation; glycolysis; D-glyceraldehyde 3-phosphate from glycerone phosphate: step 1/1. Functionally, involved in the gluconeogenesis. Catalyzes stereospecifically the conversion of dihydroxyacetone phosphate (DHAP) to D-glyceraldehyde-3-phosphate (G3P). The sequence is that of Triosephosphate isomerase from Pediococcus pentosaceus (strain ATCC 25745 / CCUG 21536 / LMG 10740 / 183-1w).